The sequence spans 554 residues: Urocanate hydratase (554 aa).

NAD(+) is bound by residues 50 to 51 (GG), glutamine 128, 174 to 176 (GMG), glutamate 194, arginine 199, 240 to 241 (NA), 261 to 265 (QTSAH), 271 to 272 (YI), and tyrosine 320. The active site involves cysteine 408. Position 490 (glycine 490) interacts with NAD(+).

It belongs to the urocanase family. It depends on NAD(+) as a cofactor.

It localises to the cytoplasm. It catalyses the reaction 4-imidazolone-5-propanoate = trans-urocanate + H2O. The protein operates within amino-acid degradation; L-histidine degradation into L-glutamate; N-formimidoyl-L-glutamate from L-histidine: step 2/3. Catalyzes the conversion of urocanate to 4-imidazolone-5-propionate. In Rubrobacter xylanophilus (strain DSM 9941 / JCM 11954 / NBRC 16129 / PRD-1), this protein is Urocanate hydratase.